Reading from the N-terminus, the 456-residue chain is Signal transduction histidine-protein kinase ArlS (456 aa).

Helical transmembrane passes span 13-33 and 157-177; these read LITT…IIFF and IVAL…SYIF. An HAMP domain is found at 179–232; it reads SQITKPIVTMSNKMNQIRRDGFQNKLELTTNYEETDNLIDTFNEMMYQIEESFN. Residues 240 to 456 enclose the Histidine kinase domain; the sequence is DASHELRTPL…TFKISFPVLN (217 aa). The residue at position 243 (H243) is a Phosphohistidine; by autocatalysis.

In terms of processing, autophosphorylated.

The protein resides in the cell membrane. The enzyme catalyses ATP + protein L-histidine = ADP + protein N-phospho-L-histidine.. In terms of biological role, member of the two-component regulatory system ArlS/ArlR. ArlS probably functions as a sensor protein kinase which is autophosphorylated at a histidine residue and transfers its phosphate group to ArlR. This Staphylococcus epidermidis (strain ATCC 35984 / DSM 28319 / BCRC 17069 / CCUG 31568 / BM 3577 / RP62A) protein is Signal transduction histidine-protein kinase ArlS (arlS).